A 562-amino-acid chain; its full sequence is 2-hydroxyisobutanoyl-CoA mutase large subunit (562 aa).

Residues 76 to 79, 86 to 88, D117, 196 to 198, R235, N240, H245, and R284 contribute to the (3S)-3-hydroxybutanoyl-CoA site; these read YPTM, TMR, and TVQ.

Belongs to the acyl-CoA mutase large subunit family. Homotetramer composed of two large substrate-binding subunits (HcmA) and two small cobalamin-binding subunits (HcmB).

It catalyses the reaction 2-hydroxyisobutanoyl-CoA = (3S)-3-hydroxybutanoyl-CoA. Together with HcmB, catalyzes the isomerization of 2-hydroxyisobutyryl-CoA and 3-hydroxybutyryl-CoA. Is specific for 2-hydroxyisobutyryl-CoA and (S)-3-hydroxybutyryl-CoA, and shows only very low activity with (R)-3-hydroxybutyryl-CoA, isobutyryl-CoA and butyryl-CoA. In vitro, can isomerize pivalyl-CoA and isovaleryl-CoA, with much lower efficiency. Plays a central role in the degradation of substrates bearing a tert-butyl moiety, such as the fuel oxygenate methyl tert-butyl ether (MTBE) and its metabolites. The chain is 2-hydroxyisobutanoyl-CoA mutase large subunit from Aquincola tertiaricarbonis.